The sequence spans 85 residues: Insect toxin 2-53 (85 aa).

A signal peptide spans methionine 1–alanine 21. Residues aspartate 22–glycine 82 enclose the LCN-type CS-alpha/beta domain. Intrachain disulfides connect cysteine 31–cysteine 81, cysteine 35–cysteine 56, cysteine 42–cysteine 63, and cysteine 46–cysteine 65. Glycine 82 is subject to Glycine amide.

Belongs to the long (4 C-C) scorpion toxin superfamily. Sodium channel inhibitor family. Beta subfamily. Expressed by the venom gland.

The protein resides in the secreted. Its function is as follows. Depressant insect toxins cause a transient contraction paralysis followed by a slow flaccid paralysis. They bind voltage-independently to sodium channels (Nav) and block action potentials, primarily by depolarizing the axonal membrane and suppressing the sodium current. The chain is Insect toxin 2-53 from Leiurus hebraeus (Hebrew deathstalker scorpion).